Reading from the N-terminus, the 1095-residue chain is Voltage-gated inwardly rectifying potassium channel KCNH3 (1095 aa).

The Cytoplasmic segment spans residues 1-228 (MPAMRGLLAP…HCGALRATWD (228 aa)). The region spanning 18 to 90 (IATRFDGTHS…QQIRKALDEH (73 aa)) is the PAS domain. Residues 93 to 145 (FKAELILYRKSGLPFWCLLDVIPIKNEKGEVALFLVSHKDISETKNRGGPDNW) form the PAC domain. Basic and acidic residues predominate over residues 137–150 (KNRGGPDNWKERGG). A disordered region spans residues 137–161 (KNRGGPDNWKERGGGRRRYGRAGSK). Residues 229 to 249 (GFILLATLYVAVTVPYSVCVS) traverse the membrane as a helical segment. Residues 250-259 (TAREPSAARG) lie on the Extracellular side of the membrane. A helical membrane pass occupies residues 260–280 (PPSVCDLAVEVLFILDIVLNF). The Cytoplasmic portion of the chain corresponds to 281–302 (RTTFVSKSGQVVFAPKSICLHY). Residues 303 to 323 (VTTWFLLDVIAALPFDLLHAF) form a helical membrane-spanning segment. Residues 324-331 (KVNVYVGA) lie on the Extracellular side of the membrane. Residues 332–352 (HLLKTVRLLRLLRLLPRLDRY) form a helical; Voltage-sensor membrane-spanning segment. Residues 353–361 (SQYSAVVLT) are Cytoplasmic-facing. The helical transmembrane segment at 362-382 (LLMAVFALLAHWVACVWFYIG) threads the bilayer. The Extracellular segment spans residues 383-464 (QQEIESSESE…GGPSLRSAYI (82 aa)). A disordered region spans residues 417 to 447 (PDGGNSSGQSENCSSSSSSSGSGGGRGSEAN). Over residues 419-436 (GGNSSGQSENCSSSSSSS) the composition is skewed to low complexity. 3 N-linked (GlcNAc...) asparagine glycosylation sites follow: asparagine 421, asparagine 428, and asparagine 447. The pore-forming intramembrane region spans 465-485 (TSLYFALSSLTSVGFGNVSAN). Positions 476–481 (SVGFGN) match the Selectivity filter motif. Residues 486–490 (TDTEK) lie on the Extracellular side of the membrane. A helical transmembrane segment spans residues 491 to 511 (IFSICTMLIGALMHAVVFGNV). The Cytoplasmic portion of the chain corresponds to 512–1095 (TAIIQRMYAR…QWTQEEGTGV (584 aa)). 593–708 (LFEAASRGCL…FAPRFSRGLR (116 aa)) lines the a nucleoside 3',5'-cyclic phosphate pocket. 3 disordered regions span residues 740 to 823 (EEKE…LPPM), 854 to 883 (VGQS…PSEA), and 965 to 1069 (GSVL…PWDP). Residues 784–796 (TAPRPRLGGRGRP) show a composition bias toward basic residues. The segment covering 857 to 872 (SGPECSSSPSPGTESG) has biased composition (low complexity). Positions 974-991 (HPRPGQPPPLMAPWPWGP) are enriched in pro residues.

The protein belongs to the potassium channel family. H (Eag) (TC 1.A.1.20) subfamily. Kv12.2/KCNH3 sub-subfamily. In terms of assembly, the potassium channel is probably composed of a homo- or heterotetrameric complex of pore-forming alpha subunits that can associate with modulating beta subunits. Interacts with KCNE1 and KCNE3; these interactions regulate KCNH3 trafficking to the plasma membrane and its subsequent voltage-gated potassium channel activity. In terms of processing, N-glycosylated. N-glycosylation mediates traffick to the cell membrane but is not necessary for voltage-gated potassium channel activity. Detected in brain, but not in other tissues.

Its subcellular location is the cell membrane. The catalysed reaction is K(+)(in) = K(+)(out). In terms of biological role, pore-forming (alpha) subunit of a voltage-gated inwardly rectifying potassium channel. Charactherized by a fast rate of activation during depolarization followed by a rapid inactivation at much more depolarized value causing inward rectification due to a C-type inactivation mechanism. Exhibits a rapid recovery from inactivation. The polypeptide is Voltage-gated inwardly rectifying potassium channel KCNH3 (Mus musculus (Mouse)).